The sequence spans 405 residues: Multifunctional CCA protein (405 aa).

ATP is bound by residues Gly8 and Arg11. CTP contacts are provided by Gly8 and Arg11. Positions 21 and 23 each coordinate Mg(2+). ATP contacts are provided by Arg91, Arg137, and Arg140. 3 residues coordinate CTP: Arg91, Arg137, and Arg140. In terms of domain architecture, HD spans 228–329; sequence TGIHSMMVLE…NDFLDKCDVW (102 aa).

This sequence belongs to the tRNA nucleotidyltransferase/poly(A) polymerase family. Bacterial CCA-adding enzyme type 1 subfamily. As to quaternary structure, monomer. Can also form homodimers and oligomers. Mg(2+) serves as cofactor. Requires Ni(2+) as cofactor.

The enzyme catalyses a tRNA precursor + 2 CTP + ATP = a tRNA with a 3' CCA end + 3 diphosphate. The catalysed reaction is a tRNA with a 3' CCA end + 2 CTP + ATP = a tRNA with a 3' CCACCA end + 3 diphosphate. In terms of biological role, catalyzes the addition and repair of the essential 3'-terminal CCA sequence in tRNAs without using a nucleic acid template. Adds these three nucleotides in the order of C, C, and A to the tRNA nucleotide-73, using CTP and ATP as substrates and producing inorganic pyrophosphate. tRNA 3'-terminal CCA addition is required both for tRNA processing and repair. Also involved in tRNA surveillance by mediating tandem CCA addition to generate a CCACCA at the 3' terminus of unstable tRNAs. While stable tRNAs receive only 3'-terminal CCA, unstable tRNAs are marked with CCACCA and rapidly degraded. The protein is Multifunctional CCA protein of Pseudoalteromonas atlantica (strain T6c / ATCC BAA-1087).